We begin with the raw amino-acid sequence, 544 residues long: Probable protein kinase UbiB (544 aa).

The Protein kinase domain maps to 123 to 501 (EFDIKPLASA…KRQQATGKFL (379 aa)). ATP-binding positions include 129–137 (LASASIAQV) and Lys152. Asp287 serves as the catalytic Proton acceptor. A run of 2 helical transmembrane segments spans residues 496 to 516 (ATGKFLFGVGATLVVCSAILV) and 519 to 539 (AYEQLSMASGIAGVTFWLLSW).

This sequence belongs to the ABC1 family. UbiB subfamily.

It localises to the cell inner membrane. It participates in cofactor biosynthesis; ubiquinone biosynthesis [regulation]. Its function is as follows. Is probably a protein kinase regulator of UbiI activity which is involved in aerobic coenzyme Q (ubiquinone) biosynthesis. This is Probable protein kinase UbiB from Vibrio parahaemolyticus serotype O3:K6 (strain RIMD 2210633).